A 522-amino-acid polypeptide reads, in one-letter code: Target of rapamycin complex 2 subunit MAPKAP1 (522 aa).

The tract at residues 2–184 (GFLDNPTIIL…KKIDVYLPLH (183 aa)) is interaction with MAP3K2. Residues 2-267 (GFLDNPTIIL…GFSTLALVEK (266 aa)) are interaction with NBN. Thr86 carries the phosphothreonine modification. Phosphoserine is present on residues Ser128, Ser186, Ser315, and Ser356. The region spanning 139–267 (QSILSVRLEQ…GFSTLALVEK (129 aa)) is the CRIM domain. An SIN1-type RBD region spans residues 279–353 (LFVRINAAHG…QSAWEFCLVR (75 aa)). Residues 382 to 487 (HYKSFKVSMI…IVLKVNYILE (106 aa)) form the SIN1-type PH domain. Position 393 (Arg393) interacts with a 1,2-diacyl-sn-glycero-3-phospho-(1D-myo-inositol-3,4,5-trisphosphate). Thr398 is subject to Phosphothreonine. Residues Lys428 and Lys464 each contribute to the a 1,2-diacyl-sn-glycero-3-phospho-(1D-myo-inositol-3,4,5-trisphosphate) site. Positions 468-522 (FESDAATVNEIVLKVNYILESRASTARADYFAQKQRKLNRRTSFSFQKEKKSGQQ) are interaction with ATF2. The residue at position 510 (Ser510) is a Phosphoserine.

This sequence belongs to the SIN1 family. Component of the mechanistic target of rapamycin complex 2 (mTORC2), consisting in two heterotretramers composed of MTOR, MLST8, RICTOR and MAPKAP1/SIN1. The mTORC2 core complex associates with PRR5/PROTOR1 and/or PRR5L/PROTOR2. Contrary to mTORC1, mTORC2 does not bind to and is not sensitive to FKBP12-rapamycin. Interacts with MAP3K2. Interacts with ATF2. Interacts with MAPK8. Interacts with GTP-bound HRAS and KRAS; inhibiting their activity. Interacts with IFNAR2. Post-translationally, phosphorylation at Ser-128 by PKC promotes relocalization to the perinuclear region, where the mTORC2 complex specifically mediates phosphorylation of SGK1. Phosphorylated at Thr-86 by AKT1 or RPS6KB1 in the presence of growth factors; the effect of this phosphorylation is however unclear. According to two studies, phosphorylation at Thr-86 by AKT1 is part of a positive feedback loop that increases mTORC2 activation. According to another study, phosphorylation at Thr-86 and Thr-398 by RPS6KB1 promotes dissociation from the mTORC2 complex, leading to inhibit mTORC2 signaling. As to expression, present in the lumenal epithelium and glandular epithelium of endometrium (at protein level).

The protein localises to the cell membrane. Its subcellular location is the cytoplasmic vesicle. It localises to the endoplasmic reticulum membrane. The protein resides in the early endosome membrane. It is found in the late endosome membrane. The protein localises to the lysosome membrane. Its subcellular location is the golgi apparatus membrane. It localises to the mitochondrion outer membrane. The protein resides in the cytoplasm. It is found in the perinuclear region. The protein localises to the nucleus. Its activity is regulated as follows. Phosphatidylinositol 3,4,5-trisphosphate (PI(3,4,5)P3) promotes MTOR activation by relieving MAPKAP1/SIN1-mediated inhibition of MTOR that takes place in absence of PI(3,4,5)P3. Its function is as follows. Component of the mechanistic target of rapamycin complex 2 (mTORC2), which transduces signals from growth factors to pathways involved in proliferation, cytoskeletal organization, lipogenesis and anabolic output. In response to growth factors, mTORC2 phosphorylates and activates AGC protein kinase family members, including AKT (AKT1, AKT2 and AKT3), PKC (PRKCA, PRKCB and PRKCE) and SGK1. In contrast to mTORC1, mTORC2 is nutrient-insensitive. Within the mTORC2 complex, MAPKAP1/SIN1 acts as a substrate adapter which recognizes and binds AGC protein kinase family members for phosphorylation by MTOR. mTORC2 plays a critical role in AKT1 activation by mediating phosphorylation of different sites depending on the context, such as 'Thr-450', 'Ser-473', 'Ser-477' or 'Thr-479', facilitating the phosphorylation of the activation loop of AKT1 on 'Thr-308' by PDPK1/PDK1 which is a prerequisite for full activation. mTORC2 catalyzes the phosphorylation of SGK1 at 'Ser-422' and of PRKCA on 'Ser-657'. The mTORC2 complex also phosphorylates various proteins involved in insulin signaling, such as FBXW8 and IGF2BP1. mTORC2 acts upstream of Rho GTPases to regulate the actin cytoskeleton, probably by activating one or more Rho-type guanine nucleotide exchange factors. mTORC2 promotes the serum-induced formation of stress-fibers or F-actin. MAPKAP1 inhibits MAP3K2 by preventing its dimerization and autophosphorylation. Inhibits HRAS and KRAS independently of mTORC2 complex. Enhances osmotic stress-induced phosphorylation of ATF2 and ATF2-mediated transcription. Involved in ciliogenesis, regulates cilia length through its interaction with CCDC28B independently of mTORC2 complex. The chain is Target of rapamycin complex 2 subunit MAPKAP1 (MAPKAP1) from Ovis aries (Sheep).